We begin with the raw amino-acid sequence, 141 residues long: Protein X (141 aa).

A compositionally biased stretch (low complexity) spans 25–48 (SSGPSFPRPAAGSAASSASSPSPS). Residues 25–52 (SSGPSFPRPAAGSAASSASSPSPSDESD) form a disordered region. Residues 68–113 (PCCLVFTCADLRTMDSTVNFVSWHANRQLGMPSKDLWTPYIKDQLL) are mitochondrial targeting sequence.

Belongs to the orthohepadnavirus protein X family. May form homodimer. May interact with host CEBPA, CFLAR, CREB1, DDB1, E4F1, HBXIP, HSPD1/HSP60, NFKBIA, POLR2E and SMAD4. Interacts with host SMC5-SMC6 complex and induces its degradation. Interacts with host TRPC4AP; leading to prevent ubiquitination of TRPC4AP. Interacts with host PLSCR1; this interaction promotes ubiquitination and degradation of HBx and impairs HBx-mediated cell proliferation. In terms of processing, a fraction may be phosphorylated in insect cells and HepG2 cells, a human hepatoblastoma cell line. Phosphorylated in vitro by host protein kinase C or mitogen-activated protein kinase. N-acetylated in insect cells.

Its subcellular location is the host cytoplasm. It localises to the host nucleus. The protein localises to the host mitochondrion. In terms of biological role, multifunctional protein that plays a role in silencing host antiviral defenses and promoting viral transcription. Does not seem to be essential for HBV infection. May be directly involved in development of cirrhosis and liver cancer (hepatocellular carcinoma). Most of cytosolic activities involve modulation of cytosolic calcium. The effect on apoptosis is controversial depending on the cell types in which the studies have been conducted. May induce apoptosis by localizing in mitochondria and causing loss of mitochondrial membrane potential. May also modulate apoptosis by binding host CFLAR, a key regulator of the death-inducing signaling complex (DISC). Promotes viral transcription by using the host E3 ubiquitin ligase DDB1 to target the SMC5-SMC6 complex to proteasomal degradation. This host complex would otherwise bind to viral episomal DNA, and prevents its transcription. Moderately stimulates transcription of many different viral and cellular transcription elements. Promoters and enhancers stimulated by HBx contain DNA binding sites for NF-kappa-B, AP-1, AP-2, c-EBP, ATF/CREB, or the calcium-activated factor NF-AT. This Marmota monax (Woodchuck) protein is Protein X.